The primary structure comprises 372 residues: Phospho-N-acetylmuramoyl-pentapeptide-transferase (372 aa).

The next 10 helical transmembrane spans lie at 21-41 (SLTL…MIFG), 71-91 (TPTM…LLWA), 98-118 (VWIL…DDWL), 134-154 (YFWL…IATL), 176-196 (MIPF…YFVI), 211-231 (GLAI…AYVS), 251-271 (VIIV…FNAH), 275-295 (VFMG…IAVM), 300-320 (IAFA…MLQV), and 349-369 (QVVA…LMTL).

This sequence belongs to the glycosyltransferase 4 family. MraY subfamily. Mg(2+) serves as cofactor.

It localises to the cell inner membrane. It catalyses the reaction UDP-N-acetyl-alpha-D-muramoyl-L-alanyl-gamma-D-glutamyl-meso-2,6-diaminopimeloyl-D-alanyl-D-alanine + di-trans,octa-cis-undecaprenyl phosphate = di-trans,octa-cis-undecaprenyl diphospho-N-acetyl-alpha-D-muramoyl-L-alanyl-D-glutamyl-meso-2,6-diaminopimeloyl-D-alanyl-D-alanine + UMP. The protein operates within cell wall biogenesis; peptidoglycan biosynthesis. Its function is as follows. Catalyzes the initial step of the lipid cycle reactions in the biosynthesis of the cell wall peptidoglycan: transfers peptidoglycan precursor phospho-MurNAc-pentapeptide from UDP-MurNAc-pentapeptide onto the lipid carrier undecaprenyl phosphate, yielding undecaprenyl-pyrophosphoryl-MurNAc-pentapeptide, known as lipid I. In Psychrobacter arcticus (strain DSM 17307 / VKM B-2377 / 273-4), this protein is Phospho-N-acetylmuramoyl-pentapeptide-transferase.